The primary structure comprises 468 residues: Uronate isomerase (468 aa).

The protein belongs to the metallo-dependent hydrolases superfamily. Uronate isomerase family.

It catalyses the reaction D-glucuronate = D-fructuronate. It carries out the reaction aldehydo-D-galacturonate = keto-D-tagaturonate. It participates in carbohydrate metabolism; pentose and glucuronate interconversion. This chain is Uronate isomerase, found in Phocaeicola vulgatus (strain ATCC 8482 / DSM 1447 / JCM 5826 / CCUG 4940 / NBRC 14291 / NCTC 11154) (Bacteroides vulgatus).